The sequence spans 560 residues: Dimethylaniline monooxygenase [N-oxide-forming] 4 (560 aa).

FAD is bound by residues 9-13, glutamate 32, and 40-41; these read GAGVS and LW. NADP(+) is bound by residues 60-61 and 195-198; these read TN and TGGD. The chain crosses the membrane as a helical span at residues 519-539; that stretch reads APVLIVSLLLIYKSSLFLELV.

This sequence belongs to the FMO family. The cofactor is FAD. In terms of tissue distribution, detected in liver and kidney (at protein level).

It is found in the microsome membrane. It localises to the endoplasmic reticulum membrane. It catalyses the reaction N,N-dimethylaniline + NADPH + O2 + H(+) = N,N-dimethylaniline N-oxide + NADP(+) + H2O. In terms of biological role, this protein is involved in the oxidative metabolism of a variety of xenobiotics such as drugs and pesticides. This is Dimethylaniline monooxygenase [N-oxide-forming] 4 (Fmo4) from Rattus norvegicus (Rat).